A 1186-amino-acid polypeptide reads, in one-letter code: Cytotoxicity-associated immunodominant antigen (1186 aa).

A compositionally biased stretch (basic and acidic residues) spans 630–649 (EKEVEKKLESKSGNKNKMEA). The interval 630–652 (EKEVEKKLESKSGNKNKMEAKAQ) is disordered.

Functionally, may be necessary for the transcription, folding, export, or function of the cytotoxin. This is Cytotoxicity-associated immunodominant antigen (cagA) from Helicobacter pylori (strain ATCC 700392 / 26695) (Campylobacter pylori).